Reading from the N-terminus, the 349-residue chain is Inositol-tetrakisphosphate 1-kinase 2 (349 aa).

Residues Lys-48 and Lys-90 each coordinate 1D-myo-inositol 1,3,4-trisphosphate. Positions 125 and 175 each coordinate ATP. 1D-myo-inositol 1,3,4-trisphosphate-binding residues include His-186 and Lys-218. ATP is bound by residues 207–218 (QEFVNHGGILFK) and Ser-233. Mg(2+) contacts are provided by Asp-298, Asp-313, and Asn-315. Asn-315 provides a ligand contact to 1D-myo-inositol 1,3,4-trisphosphate.

This sequence belongs to the ITPK1 family. As to quaternary structure, monomer. Requires Mg(2+) as cofactor.

The catalysed reaction is 1D-myo-inositol 3,4,5,6-tetrakisphosphate + ATP = 1D-myo-inositol 1,3,4,5,6-pentakisphosphate + ADP + H(+). The enzyme catalyses 1D-myo-inositol 1,3,4-trisphosphate + ATP = 1D-myo-inositol 1,3,4,5-tetrakisphosphate + ADP + H(+). It carries out the reaction 1D-myo-inositol 1,3,4-trisphosphate + ATP = 1D-myo-inositol 1,3,4,6-tetrakisphosphate + ADP + H(+). Its function is as follows. Kinase that can phosphorylate various inositol polyphosphate such as Ins(3,4,5,6)P4 or Ins(1,3,4)P3 and participates in phytic acid biosynthesis in developing seeds. Phytic acid is the primary storage form of phosphorus in cereal grains and other plant seeds. The polypeptide is Inositol-tetrakisphosphate 1-kinase 2 (ITPK2) (Oryza sativa subsp. indica (Rice)).